A 316-amino-acid chain; its full sequence is Probable cobalamin biosynthesis protein CobD (316 aa).

A run of 5 helical transmembrane segments spans residues 1–21 (MITE…DIVL), 50–70 (ISGM…GFAL), 89–109 (ILAL…KSLI), 165–185 (PLFY…ALAF), and 294–314 (ISLI…LLIL).

The protein belongs to the CobD/CbiB family.

The protein localises to the cell membrane. Its pathway is cofactor biosynthesis; adenosylcobalamin biosynthesis. In terms of biological role, converts cobyric acid to cobinamide by the addition of aminopropanol on the F carboxylic group. This chain is Probable cobalamin biosynthesis protein CobD, found in Methanothrix thermoacetophila (strain DSM 6194 / JCM 14653 / NBRC 101360 / PT) (Methanosaeta thermophila).